The primary structure comprises 154 residues: Large ribosomal subunit protein uL30 (154 aa).

The protein belongs to the universal ribosomal protein uL30 family. Part of the 50S ribosomal subunit.

This chain is Large ribosomal subunit protein uL30, found in Methanocaldococcus jannaschii (strain ATCC 43067 / DSM 2661 / JAL-1 / JCM 10045 / NBRC 100440) (Methanococcus jannaschii).